The chain runs to 484 residues: MKLIVKVFPEITIKSPPVRKKFIRQLGKNIRTVLRELDADIVVGGVWDNLEVETRLTDPKVLQGIRERLSCMPGIANFLQVAEYPLGDLDDVVAKCELHYADLLPGKMFSVRCKRAGRHDFSSMDVEKYVGSKLRMQCGAAGIELKKPDLVVRMEIRDQRLFVVHDQHQGMGGYPLGALEQTLVLMSGGFDSTVAAYQIMRRGLMAHFCFFNLGGRAHELGVMEVAHFIWKKYGSSQRVLFVSVPFEEVLGEILQKVDNSHMGVVLKRMMLRAASAVADRLEIDVLVTGEAISQVASQTLPNLSLIDAATDKLVLRPLVATHKQDIVDLATEIGTADFARHMPEYCGVISVNPKTNAKRNRVEYEEKQFDMAILEQALERAKLVSIDRVIDDLSRNVDIEEVSQALAGQVILDIRHPDAQEDQPLQVPGVEIQTLPFYALNSRFKALDDTRQYLLYCDKGVMSRLHAHHLLSEGHANVRVYRPS.

The THUMP domain maps to 63–167; sequence QGIRERLSCM…DQRLFVVHDQ (105 aa). Residues 185–186, lysine 267, glycine 289, and glutamine 298 contribute to the ATP site; that span reads LM. A disulfide bond links cysteine 346 and cysteine 457. The Rhodanese domain maps to 405 to 483; sequence ALAGQVILDI…GHANVRVYRP (79 aa). Cysteine 457 acts as the Cysteine persulfide intermediate in catalysis.

Belongs to the ThiI family.

The protein resides in the cytoplasm. It carries out the reaction [ThiI sulfur-carrier protein]-S-sulfanyl-L-cysteine + a uridine in tRNA + 2 reduced [2Fe-2S]-[ferredoxin] + ATP + H(+) = [ThiI sulfur-carrier protein]-L-cysteine + a 4-thiouridine in tRNA + 2 oxidized [2Fe-2S]-[ferredoxin] + AMP + diphosphate. The catalysed reaction is [ThiS sulfur-carrier protein]-C-terminal Gly-Gly-AMP + S-sulfanyl-L-cysteinyl-[cysteine desulfurase] + AH2 = [ThiS sulfur-carrier protein]-C-terminal-Gly-aminoethanethioate + L-cysteinyl-[cysteine desulfurase] + A + AMP + 2 H(+). Its pathway is cofactor biosynthesis; thiamine diphosphate biosynthesis. Catalyzes the ATP-dependent transfer of a sulfur to tRNA to produce 4-thiouridine in position 8 of tRNAs, which functions as a near-UV photosensor. Also catalyzes the transfer of sulfur to the sulfur carrier protein ThiS, forming ThiS-thiocarboxylate. This is a step in the synthesis of thiazole, in the thiamine biosynthesis pathway. The sulfur is donated as persulfide by IscS. The polypeptide is tRNA sulfurtransferase (Pseudomonas syringae pv. syringae (strain B728a)).